Reading from the N-terminus, the 394-residue chain is Small ribosomal subunit protein uS2m (394 aa).

The N-terminal 25 residues, 1-25, are a transit peptide targeting the mitochondrion; it reads MQRHVFARNFRRLSLLRNPSLTKRF.

The protein belongs to the universal ribosomal protein uS2 family. In terms of assembly, component of the mitochondrial small ribosomal subunit (mt-SSU). Mature yeast 74S mitochondrial ribosomes consist of a small (37S) and a large (54S) subunit. The 37S small subunit contains a 15S ribosomal RNA (15S mt-rRNA) and 34 different proteins. The 54S large subunit contains a 21S rRNA (21S mt-rRNA) and 46 different proteins.

The protein resides in the mitochondrion. Its function is as follows. Component of the mitochondrial ribosome (mitoribosome), a dedicated translation machinery responsible for the synthesis of mitochondrial genome-encoded proteins, including at least some of the essential transmembrane subunits of the mitochondrial respiratory chain. The mitoribosomes are attached to the mitochondrial inner membrane and translation products are cotranslationally integrated into the membrane. This is Small ribosomal subunit protein uS2m (MRP4) from Saccharomyces cerevisiae (strain ATCC 204508 / S288c) (Baker's yeast).